The primary structure comprises 447 residues: Argininosuccinate synthase (447 aa).

Residues 17–25 (AFSGGLDTS) and Ala-43 contribute to the ATP site. An L-citrulline-binding site is contributed by Tyr-99. Residues Gly-129 and Thr-131 each coordinate ATP. Residues Thr-131, Asn-135, and Asp-136 each contribute to the L-aspartate site. Residue Asn-135 participates in L-citrulline binding. Residue Asp-136 participates in ATP binding. Residues Arg-139 and Ser-192 each contribute to the L-citrulline site. Residue Asp-194 participates in ATP binding. 3 residues coordinate L-citrulline: Thr-201, Glu-203, and Glu-280.

This sequence belongs to the argininosuccinate synthase family. Type 2 subfamily. In terms of assembly, homotetramer.

The protein resides in the cytoplasm. The catalysed reaction is L-citrulline + L-aspartate + ATP = 2-(N(omega)-L-arginino)succinate + AMP + diphosphate + H(+). It participates in amino-acid biosynthesis; L-arginine biosynthesis; L-arginine from L-ornithine and carbamoyl phosphate: step 2/3. This chain is Argininosuccinate synthase, found in Escherichia fergusonii (strain ATCC 35469 / DSM 13698 / CCUG 18766 / IAM 14443 / JCM 21226 / LMG 7866 / NBRC 102419 / NCTC 12128 / CDC 0568-73).